Reading from the N-terminus, the 81-residue chain is ATP synthase subunit c (81 aa).

2 consecutive transmembrane segments (helical) span residues 7–27 (AASV…PGIG) and 57–77 (LAFM…LLFA).

Belongs to the ATPase C chain family. As to quaternary structure, F-type ATPases have 2 components, F(1) - the catalytic core - and F(0) - the membrane proton channel. F(1) has five subunits: alpha(3), beta(3), gamma(1), delta(1), epsilon(1). F(0) has four main subunits: a(1), b(1), b'(1) and c(10-14). The alpha and beta chains form an alternating ring which encloses part of the gamma chain. F(1) is attached to F(0) by a central stalk formed by the gamma and epsilon chains, while a peripheral stalk is formed by the delta, b and b' chains.

It is found in the cellular thylakoid membrane. F(1)F(0) ATP synthase produces ATP from ADP in the presence of a proton or sodium gradient. F-type ATPases consist of two structural domains, F(1) containing the extramembraneous catalytic core and F(0) containing the membrane proton channel, linked together by a central stalk and a peripheral stalk. During catalysis, ATP synthesis in the catalytic domain of F(1) is coupled via a rotary mechanism of the central stalk subunits to proton translocation. In terms of biological role, key component of the F(0) channel; it plays a direct role in translocation across the membrane. A homomeric c-ring of between 10-14 subunits forms the central stalk rotor element with the F(1) delta and epsilon subunits. This Nostoc sp. (strain PCC 7120 / SAG 25.82 / UTEX 2576) protein is ATP synthase subunit c.